The primary structure comprises 645 residues: 1-deoxy-D-xylulose-5-phosphate synthase 1 (645 aa).

A disordered region spans residues Met1–Ser20. Thiamine diphosphate-binding positions include His78 and Ala119–Ser121. Asp150 is a binding site for Mg(2+). Thiamine diphosphate-binding positions include Gly151–Ser152, Asn179, Tyr291, and Glu373. Residue Asn179 coordinates Mg(2+).

This sequence belongs to the transketolase family. DXPS subfamily. In terms of assembly, homodimer. Mg(2+) is required as a cofactor. It depends on thiamine diphosphate as a cofactor.

It carries out the reaction D-glyceraldehyde 3-phosphate + pyruvate + H(+) = 1-deoxy-D-xylulose 5-phosphate + CO2. It functions in the pathway metabolic intermediate biosynthesis; 1-deoxy-D-xylulose 5-phosphate biosynthesis; 1-deoxy-D-xylulose 5-phosphate from D-glyceraldehyde 3-phosphate and pyruvate: step 1/1. Its function is as follows. Catalyzes the acyloin condensation reaction between C atoms 2 and 3 of pyruvate and glyceraldehyde 3-phosphate to yield 1-deoxy-D-xylulose-5-phosphate (DXP). This Roseobacter denitrificans (strain ATCC 33942 / OCh 114) (Erythrobacter sp. (strain OCh 114)) protein is 1-deoxy-D-xylulose-5-phosphate synthase 1.